We begin with the raw amino-acid sequence, 386 residues long: S-adenosylmethionine synthase (386 aa).

Residue H16 participates in ATP binding. D18 contributes to the Mg(2+) binding site. E44 contacts K(+). The L-methionine site is built by E57 and Q100. Residues 100–110 form a flexible loop region; it reads QSRDITQGVDR. ATP is bound by residues 165 to 167, D240, 246 to 247, A263, and K267; these read DAK and RK. Position 240 (D240) interacts with L-methionine. L-methionine is bound at residue K271.

It belongs to the AdoMet synthase family. As to quaternary structure, homotetramer; dimer of dimers. Mg(2+) is required as a cofactor. Requires K(+) as cofactor.

Its subcellular location is the cytoplasm. The catalysed reaction is L-methionine + ATP + H2O = S-adenosyl-L-methionine + phosphate + diphosphate. The protein operates within amino-acid biosynthesis; S-adenosyl-L-methionine biosynthesis; S-adenosyl-L-methionine from L-methionine: step 1/1. In terms of biological role, catalyzes the formation of S-adenosylmethionine (AdoMet) from methionine and ATP. The overall synthetic reaction is composed of two sequential steps, AdoMet formation and the subsequent tripolyphosphate hydrolysis which occurs prior to release of AdoMet from the enzyme. The protein is S-adenosylmethionine synthase of Francisella tularensis subsp. tularensis (strain WY96-3418).